The sequence spans 271 residues: Pyrroline-5-carboxylate reductase (271 aa).

The protein belongs to the pyrroline-5-carboxylate reductase family.

The protein localises to the cytoplasm. It catalyses the reaction L-proline + NADP(+) = (S)-1-pyrroline-5-carboxylate + NADPH + 2 H(+). It carries out the reaction L-proline + NAD(+) = (S)-1-pyrroline-5-carboxylate + NADH + 2 H(+). Its pathway is amino-acid biosynthesis; L-proline biosynthesis; L-proline from L-glutamate 5-semialdehyde: step 1/1. Catalyzes the reduction of 1-pyrroline-5-carboxylate (PCA) to L-proline. This is Pyrroline-5-carboxylate reductase from Staphylococcus epidermidis (strain ATCC 35984 / DSM 28319 / BCRC 17069 / CCUG 31568 / BM 3577 / RP62A).